A 425-amino-acid polypeptide reads, in one-letter code: GTPase Obg (425 aa).

The region spanning 1 to 158 (MFKDYAKIHV…LWLELELKLL (158 aa)) is the Obg domain. An OBG-type G domain is found at 159-329 (ADVGLVGFPN…LIYRTYRLLE (171 aa)). GTP contacts are provided by residues 165 to 172 (GFPNAGKS), 190 to 194 (FTTLE), 212 to 215 (DIPG), 282 to 285 (NKTD), and 310 to 312 (SAL). Residues Ser-172 and Thr-192 each coordinate Mg(2+). An OCT domain is found at 341–421 (VPDERETDVT…IGRFEFEYSE (81 aa)).

This sequence belongs to the TRAFAC class OBG-HflX-like GTPase superfamily. OBG GTPase family. As to quaternary structure, monomer. The cofactor is Mg(2+).

Its subcellular location is the cytoplasm. An essential GTPase which binds GTP, GDP and possibly (p)ppGpp with moderate affinity, with high nucleotide exchange rates and a fairly low GTP hydrolysis rate. Plays a role in control of the cell cycle, stress response, ribosome biogenesis and in those bacteria that undergo differentiation, in morphogenesis control. The chain is GTPase Obg from Desulforudis audaxviator (strain MP104C).